Here is a 243-residue protein sequence, read N- to C-terminus: Probable transcriptional regulatory protein BP2308 (243 aa).

Residues 1 to 21 are disordered; it reads MAGHSKWANIQHRKGRQDAKR.

The protein belongs to the TACO1 family.

It localises to the cytoplasm. This is Probable transcriptional regulatory protein BP2308 from Bordetella pertussis (strain Tohama I / ATCC BAA-589 / NCTC 13251).